The following is a 371-amino-acid chain: N-acetyldiaminopimelate deacetylase (371 aa).

Asp68 is a catalytic residue. Glu127 functions as the Proton acceptor in the catalytic mechanism.

It belongs to the peptidase M20A family. N-acetyldiaminopimelate deacetylase subfamily.

The enzyme catalyses N-acetyl-(2S,6S)-2,6-diaminopimelate + H2O = (2S,6S)-2,6-diaminopimelate + acetate. It functions in the pathway amino-acid biosynthesis; L-lysine biosynthesis via DAP pathway; LL-2,6-diaminopimelate from (S)-tetrahydrodipicolinate (acetylase route): step 3/3. Functionally, catalyzes the conversion of N-acetyl-diaminopimelate to diaminopimelate and acetate. This Halalkalibacterium halodurans (strain ATCC BAA-125 / DSM 18197 / FERM 7344 / JCM 9153 / C-125) (Bacillus halodurans) protein is N-acetyldiaminopimelate deacetylase.